We begin with the raw amino-acid sequence, 252 residues long: Triosephosphate isomerase (252 aa).

Position 10–12 (10–12) interacts with substrate; it reads NWK. The Electrophile role is filled by histidine 96. Glutamate 168 (proton acceptor) is an active-site residue. Residues glycine 174, serine 214, and 235-236 contribute to the substrate site; that span reads GG.

It belongs to the triosephosphate isomerase family. As to quaternary structure, homodimer.

The protein resides in the cytoplasm. The enzyme catalyses D-glyceraldehyde 3-phosphate = dihydroxyacetone phosphate. It participates in carbohydrate biosynthesis; gluconeogenesis. It functions in the pathway carbohydrate degradation; glycolysis; D-glyceraldehyde 3-phosphate from glycerone phosphate: step 1/1. In terms of biological role, involved in the gluconeogenesis. Catalyzes stereospecifically the conversion of dihydroxyacetone phosphate (DHAP) to D-glyceraldehyde-3-phosphate (G3P). This chain is Triosephosphate isomerase, found in Streptococcus agalactiae serotype Ia (strain ATCC 27591 / A909 / CDC SS700).